The sequence spans 537 residues: Tegument protein BRRF2 (537 aa).

Disordered stretches follow at residues 322-466 (PRFL…AEEF) and 486-537 (GLRV…LSVV). The segment covering 334 to 347 (EPQQTCSQLTSRGN) has biased composition (polar residues). Low complexity predominate over residues 420 to 441 (VTGSSQAAPSSSSVTPVASLSG). The segment covering 492-517 (DEDEDGSEDGEFSDLDLSDSDHEGDE) has biased composition (acidic residues).

This sequence belongs to the lymphocryptovirus BRRF2 family.

It localises to the virion tegument. In Homo sapiens (Human), this protein is Tegument protein BRRF2.